The chain runs to 408 residues: LL-diaminopimelate aminotransferase (408 aa).

2 residues coordinate substrate: tyrosine 15 and glycine 42. Pyridoxal 5'-phosphate contacts are provided by residues tyrosine 72, 108–109 (SK), tyrosine 132, asparagine 187, tyrosine 218, and 246–248 (SFS). Residues lysine 109, tyrosine 132, and asparagine 187 each coordinate substrate. An N6-(pyridoxal phosphate)lysine modification is found at lysine 249. Pyridoxal 5'-phosphate is bound by residues arginine 257 and asparagine 292. The substrate site is built by asparagine 292 and arginine 388.

This sequence belongs to the class-I pyridoxal-phosphate-dependent aminotransferase family. LL-diaminopimelate aminotransferase subfamily. As to quaternary structure, homodimer. The cofactor is pyridoxal 5'-phosphate.

It catalyses the reaction (2S,6S)-2,6-diaminopimelate + 2-oxoglutarate = (S)-2,3,4,5-tetrahydrodipicolinate + L-glutamate + H2O + H(+). The protein operates within amino-acid biosynthesis; L-lysine biosynthesis via DAP pathway; LL-2,6-diaminopimelate from (S)-tetrahydrodipicolinate (aminotransferase route): step 1/1. Involved in the synthesis of meso-diaminopimelate (m-DAP or DL-DAP), required for both lysine and peptidoglycan biosynthesis. Catalyzes the direct conversion of tetrahydrodipicolinate to LL-diaminopimelate. This chain is LL-diaminopimelate aminotransferase, found in Prochlorococcus marinus (strain MIT 9313).